An 80-amino-acid chain; its full sequence is Polcalcin Cyn d 7 (80 aa).

EF-hand domains follow at residues 2–37 (ADTGDMEHIFKRFDTNGDGKISLAELTDALRTLGST) and 40–72 (DEVQRMMAEIDTDGDGFIDFDEFISFCNANPGL). Ca(2+)-binding residues include D15, N17, D19, K21, E26, D50, D52, D54, and E61.

The polypeptide is Polcalcin Cyn d 7 (Cynodon dactylon (Bermuda grass)).